Consider the following 638-residue polypeptide: E3 ubiquitin-protein ligase TRIM47 (638 aa).

M1 carries the post-translational modification N-acetylmethionine. An RING-type zinc finger spans residues 9-58 (CPICLEPLREPVTLPCGHNFCLACLGALWPHRGASGAGGPGGAARCPLCQ). A Phosphothreonine modification is found at T72. The interval 79-119 (LRQGSGPGSGPGPAPALAPEPSAPSALPSVPEPSAPCAPEP) is disordered. Pro residues-rich tracts occupy residues 88-100 (GPGP…PEPS) and 108-119 (VPEPSAPCAPEP). Residues 177–217 (LEESLCPRHLRPLERYCRAERVCLCEACAAQEHRGHELVPL) form a B box-type zinc finger. Residues C182, H185, C204, and H209 each coordinate Zn(2+). A coiled-coil region spans residues 296–324 (MLGRSQGDLRRQEEQRSRLSRARQNLSQV). 2 disordered regions span residues 300 to 322 (SQGD…QNLS) and 384 to 411 (LRGP…LEST). The segment covering 302-312 (GDLRRQEEQRS) has biased composition (basic and acidic residues). Residues 410–631 (STNLLESEAP…LQIGPLKKSC (222 aa)) enclose the B30.2/SPRY domain. Position 461 is a phosphoserine (S461). Position 582 is an omega-N-methylarginine (R582). The residue at position 588 (S588) is a Phosphoserine.

This sequence belongs to the TRIM/RBCC family. As to expression, low expression in most tissues. Higher expression in kidney tubular cells. Overexpressed in astrocytoma tumor cells.

Its subcellular location is the cytoplasm. The protein resides in the nucleus. The enzyme catalyses S-ubiquitinyl-[E2 ubiquitin-conjugating enzyme]-L-cysteine + [acceptor protein]-L-lysine = [E2 ubiquitin-conjugating enzyme]-L-cysteine + N(6)-ubiquitinyl-[acceptor protein]-L-lysine.. It functions in the pathway protein modification; protein ubiquitination. In terms of biological role, E3 ubiquitin-protein ligase that mediates the ubiquitination and proteasomal degradation of CYLD. The sequence is that of E3 ubiquitin-protein ligase TRIM47 from Homo sapiens (Human).